A 363-amino-acid chain; its full sequence is Dihydroorotate dehydrogenase (quinone) (363 aa).

FMN is bound by residues 67–71 (AGLDK) and Thr91. Lys71 contributes to the substrate binding site. 116–120 (NRMGF) is a binding site for substrate. The FMN site is built by Asn145 and Asn178. Asn178 contacts substrate. The Nucleophile role is filled by Ser181. Asn183 contacts substrate. Residues Lys219 and Thr247 each coordinate FMN. 248-249 (NT) lines the substrate pocket. FMN is bound by residues Gly268, Gly297, and 318–319 (YT).

The protein belongs to the dihydroorotate dehydrogenase family. Type 2 subfamily. In terms of assembly, monomer. It depends on FMN as a cofactor.

The protein resides in the cell membrane. It catalyses the reaction (S)-dihydroorotate + a quinone = orotate + a quinol. The protein operates within pyrimidine metabolism; UMP biosynthesis via de novo pathway; orotate from (S)-dihydroorotate (quinone route): step 1/1. Functionally, catalyzes the conversion of dihydroorotate to orotate with quinone as electron acceptor. This chain is Dihydroorotate dehydrogenase (quinone), found in Myxococcus xanthus (strain DK1622).